Reading from the N-terminus, the 360-residue chain is Luc7-like protein (360 aa).

A coiled-coil region spans residues 143-206 (KEQNSKITEL…QEKNENKRMS (64 aa)). Residues 255 to 360 (LGRTDFYNAP…DDRRKRDRNY (106 aa)) are disordered. Over residues 269-293 (DSYRDDRRSSSSSYHDIDGRRDHRY) the composition is skewed to basic and acidic residues. The span at 312 to 321 (NNGRGSSRDN) shows a compositional bias: low complexity. Over residues 329–360 (RDYRNDHGKDYDRKRERDYYNDDDRRKRDRNY) the composition is skewed to basic and acidic residues.

Belongs to the Luc7 family.

It is found in the nucleus. In terms of biological role, may play a role in RNA splicing. The chain is Luc7-like protein (crop) from Dictyostelium discoideum (Social amoeba).